The primary structure comprises 367 residues: Quinolinate synthase (367 aa).

Residues His45 and Ser62 each contribute to the iminosuccinate site. Cys109 contacts [4Fe-4S] cluster. Residues 140–142 (YVN) and Ser161 contribute to the iminosuccinate site. Cys229 serves as a coordination point for [4Fe-4S] cluster. Residues 255-257 (HPE) and Thr272 contribute to the iminosuccinate site. Cys319 is a binding site for [4Fe-4S] cluster.

It belongs to the quinolinate synthase family. Type 3 subfamily. [4Fe-4S] cluster is required as a cofactor.

Its subcellular location is the cytoplasm. The enzyme catalyses iminosuccinate + dihydroxyacetone phosphate = quinolinate + phosphate + 2 H2O + H(+). It participates in cofactor biosynthesis; NAD(+) biosynthesis; quinolinate from iminoaspartate: step 1/1. Catalyzes the condensation of iminoaspartate with dihydroxyacetone phosphate to form quinolinate. The chain is Quinolinate synthase from Halalkalibacterium halodurans (strain ATCC BAA-125 / DSM 18197 / FERM 7344 / JCM 9153 / C-125) (Bacillus halodurans).